The sequence spans 443 residues: UDP-N-acetylmuramate--L-alanine ligase (443 aa).

Gly110–Ser116 contributes to the ATP binding site.

This sequence belongs to the MurCDEF family.

It localises to the cytoplasm. It carries out the reaction UDP-N-acetyl-alpha-D-muramate + L-alanine + ATP = UDP-N-acetyl-alpha-D-muramoyl-L-alanine + ADP + phosphate + H(+). The protein operates within cell wall biogenesis; peptidoglycan biosynthesis. Cell wall formation. The sequence is that of UDP-N-acetylmuramate--L-alanine ligase from Streptococcus equi subsp. equi (strain 4047).